Consider the following 348-residue polypeptide: Fe(3+) ions import ATP-binding protein FbpC (348 aa).

The ABC transporter domain occupies 7–237; sequence VELRNVTKRF…PASRFMASFM (231 aa). 39–46 contributes to the ATP binding site; that stretch reads GPSGCGKT.

It belongs to the ABC transporter superfamily. Fe(3+) ion importer (TC 3.A.1.10) family. The complex is composed of two ATP-binding proteins (FbpC), two transmembrane proteins (FbpB) and a solute-binding protein (FbpA).

The protein resides in the cell inner membrane. The enzyme catalyses Fe(3+)(out) + ATP + H2O = Fe(3+)(in) + ADP + phosphate + H(+). In terms of biological role, part of the ABC transporter complex FbpABC involved in Fe(3+) ions import. Responsible for energy coupling to the transport system. The chain is Fe(3+) ions import ATP-binding protein FbpC from Escherichia coli (strain K12).